The chain runs to 708 residues: Large T antigen (708 aa).

Methionine 1 is modified (N-acetylmethionine; by host). In terms of domain architecture, J spans 12-75; that stretch reads QLMDLLGLER…VKYAHQPDFG (64 aa). The segment at 63–89 is binding of LT to the CUL7 complex; the sequence is EDGVKYAHQPDFGGFWDATEIPTYGTD. The LXCXE motif motif lies at 103-107; that stretch reads LFCSE. Phosphoserine; by host is present on residues serine 106, serine 112, serine 120, and serine 123. Residues 109–134 form a disordered region; it reads MPSSDDEATADSQHSTPPKKKRKVED. At threonine 124 the chain carries Phosphothreonine; by host. Residues 125–132 carry the Nuclear localization signal motif; the sequence is PPKKKRKV. Positions 139 to 254 form a DNA-binding region, T-ag OBD; that stretch reads PSELLSFLSH…EESLPGGLKE (116 aa). A T-ag D1-type zinc finger spans residues 265–357; the sequence is TKQVSWKLVT…KRVDSLQLTR (93 aa). Zn(2+) contacts are provided by cysteine 302, cysteine 305, histidine 313, and histidine 317. A binding to host TP53 protein region spans residues 337-672; that stretch reads CQQAVDTVLA…IDSQSQGSFQ (336 aa). The region spanning 400–560 is the SF3 helicase domain; it reads KMDSVVYDFL…DYLKHCLERS (161 aa). The ATPase activity stretch occupies residues 418–616; it reads KKRYWLFKGP…FSLSVYQKMK (199 aa). Residue 426-433 participates in ATP binding; the sequence is GPIDSGKT. Residues 627–708 form a C-terminal region region; sequence DWLRNSDDDD…PPTPPPEPET (82 aa). Residues 630–685 are disordered; that stretch reads RNSDDDDEDSQENADKNEDGGEKNMEDSGHETGIDSQSQGSFQAPQSSQSVHDHNQ. Position 639 is a phosphoserine; by host (serine 639). The span at 642–662 shows a compositional bias: basic and acidic residues; it reads NADKNEDGGEKNMEDSGHETG. Polar residues predominate over residues 663–679; sequence IDSQSQGSFQAPQSSQS. Phosphoserine; by host occurs at positions 676, 677, and 679. Lysine 697 is modified (N6-acetyllysine; by host). The interval 699–708 is CPD; the sequence is PPTPPPEPET. Threonine 701 carries the post-translational modification Phosphothreonine; by host.

Isoform large T antigen forms homohexamers in the presence of ATP. Interacts with host HDAC1. Interacts (via LXCXE domain) with host RB1; the interaction induces the aberrant dissociation of RB1-E2F1 complex thereby disrupting RB1's activity. Interacts (via LXCXE domain) with host pRB-related proteins RBL1 and RBL2. Interacts (via C-terminus) with host TOP1 and POLA1 allowing DNA replication. Interacts with host TP53, inhibiting TP53 binding to DNA. Interacts with host preinitiation complex components TBP, TFIIA and TFIID to regulate transcription initiation. LT interacts (via CPD region) with host FBW7gamma isoform (via WD repeats); seems to function as a competitive inhibitor of FBW7gamma function for physiologic substrates. LT interacts with host E3 ubiquitin ligase CUL7; this interaction seems to inhibit CUL7. Component of a SCF(CUL7)-like complex composed of SV40 Lt and host proteins CUL7, SKP1, RBX1, and FBXW8. LT interacts with host BUB1; this interaction induces activation of a DNA damage response and promotes p53 stabilization and phosphorylation. Interacts with host FAM111A and this interaction is required for efficient viral replication and sustained viral gene expression in restrictive cell types. It depends on Mg(2+) as a cofactor. Phosphorylated on both serine and threonine residues. Phosphorylation on Ser-120 and Ser-123 inhibits viral replication, while phosphorylation on Thr-124 enhances replication by activating the DNA-binding domain. Phosphorylation on Thr-701 is required for binding to host FBW7gamma isoform. Dephosphorylated preferentially by PP2A on Ser-120, Ser-123, Ser-677 and perhaps Ser-679. Small t antigen inhibits the dephosphorylation by the AC form of PP2A. Post-translationally, O-Glycosylated near the C-terminal region. In terms of processing, acetylated by CBP in a TP53-dependent manner.

The protein resides in the host nucleus. It carries out the reaction Couples ATP hydrolysis with the unwinding of duplex DNA by translocating in the 3'-5' direction.. It catalyses the reaction ATP + H2O = ADP + phosphate + H(+). DNA helicase activity is inhibited by ATP-gamma-S. Functionally, isoform large T antigen is a key early protein essential for both driving viral replication and inducing cellular transformation. Plays a role in viral genome replication by driving entry of quiescent cells into the cell cycle and by autoregulating the synthesis of viral early mRNA. Displays highly oncogenic activities by corrupting the host cellular checkpoint mechanisms that guard cell division and the transcription, replication, and repair of DNA. Participates in the modulation of cellular gene expression preceeding viral DNA replication. This step involves binding to host key cell cycle regulators retinoblastoma protein RB1/pRb and TP53. Induces the disassembly of host E2F1 transcription factors from RB1, thus promoting transcriptional activation of E2F1-regulated S-phase genes. Inhibits host TP53 binding to DNA, abrogating the ability of TP53 to stimulate gene expression. Plays the role of a TFIID-associated factor (TAF) in transcription initiation for all three RNA polymerases, by stabilizing the TBP-TFIIA complex on promoters. Initiates viral DNA replication and unwinding via interactions with the viral origin of replication. Binds two adjacent sites in the SV40 origin. The replication fork movement is facilitated by Large T antigen helicase activity. Has processive 3'-5' DNA helicase activity which requires a short 3' single-stranded region and ATP; other (d)NTPs can partially replace ATP. Activates the transcription of viral late mRNA, through host TBP and TFIIA stabilization. Interferes with histone deacetylation mediated by HDAC1, leading to activation of transcription. May inactivate the growth-suppressing properties of the E3 ubiquitin ligase CUL7. Its function is as follows. Isoform 17kT antigen targets host RBL2 for degradation and promotes cell proliferation. Transactivates host cyclin A promoter through its J domain. Unwinds G4 DNA (planar arrays of 4 guanine bases stabilized by hydrogen bonds, parallel and antiparallel arrays were tested); unwinding occurs in the 3'-5' direction, requires a 3' single-stranded end and hydrolyzable ATP. In Macaca (macaques), this protein is Large T antigen.